Reading from the N-terminus, the 559-residue chain is Excitatory amino acid transporter 5 (559 aa).

At 1–16 (MVLDAVLARGRTVCKH) the chain is on the cytoplasmic side. 3 consecutive transmembrane segments (helical) span residues 17 to 37 (NGLL…GFFL), 60 to 80 (MLKM…LASL), and 94 to 114 (AYYL…VSII). Residues 115-215 (HPGGAAQKET…EIVYKSEPGT (101 aa)) lie on the Extracellular side of the membrane. Asparagine 190 carries N-linked (GlcNAc...) asparagine glycosylation. A helical membrane pass occupies residues 216-236 (SDGMNVLGIVIFSATMGIMLG). Asparagine 253 is a glycosylation site (N-linked (GlcNAc...) asparagine). The next 6 helical transmembrane spans lie at 259–279 (IVAV…AGKI), 298–318 (TVVC…YFLI), 329–349 (GVLQ…TLPI), 371–391 (VGAT…AIFI), 413–433 (AASI…VIVL), and 456–476 (FRTM…AHIC).

This sequence belongs to the dicarboxylate/amino acid:cation symporter (DAACS) (TC 2.A.23) family. SLC1A7 subfamily. As to quaternary structure, interacts with the PDZ domains of DLG4. In terms of tissue distribution, expressed in retina, located in both cone and rod photoreceptor terminals and in axon terminals of rod bipolar cells.

It is found in the photoreceptor inner segment membrane. Its subcellular location is the synaptic cell membrane. It catalyses the reaction K(+)(in) + L-glutamate(out) + 3 Na(+)(out) + H(+)(out) = K(+)(out) + L-glutamate(in) + 3 Na(+)(in) + H(+)(in). It carries out the reaction K(+)(in) + L-aspartate(out) + 3 Na(+)(out) + H(+)(out) = K(+)(out) + L-aspartate(in) + 3 Na(+)(in) + H(+)(in). The catalysed reaction is D-aspartate(out) + K(+)(in) + 3 Na(+)(out) + H(+)(out) = D-aspartate(in) + K(+)(out) + 3 Na(+)(in) + H(+)(in). Functionally, sodium-dependent, high-affinity amino acid transporter that mediates the uptake of L-glutamate and also L-aspartate and D-aspartate. Functions as a symporter that transports one amino acid molecule together with two or three Na(+) ions and one proton, in parallel with the counter-transport of one K(+) ion. Acts primarily as an inhibitory glutamate-gated chloride channel being a major inhibitory presynaptic receptor at mammalian rod bipolar cell axon terminals. Glutamate binding gates a large Cl(-) conductance that mediates inhibition, affecting visual processing in the retina. This is Excitatory amino acid transporter 5 from Mus musculus (Mouse).